Reading from the N-terminus, the 360-residue chain is Phospho-N-acetylmuramoyl-pentapeptide-transferase (360 aa).

The next 10 membrane-spanning stretches (helical) occupy residues 26–46 (AILS…IMIK), 70–90 (GTPT…ILLW), 94–114 (SNPY…VGFV), 132–152 (WKYF…YAYG), 168–188 (VMPQ…VGTS), 199–219 (GLAI…AWAT), 236–256 (ASEL…FLWF), 263–283 (VFMG…IAVL), 288–308 (LVLV…ILQV), and 338–358 (VIVR…ATLK).

Belongs to the glycosyltransferase 4 family. MraY subfamily. The cofactor is Mg(2+).

The protein resides in the cell inner membrane. The enzyme catalyses UDP-N-acetyl-alpha-D-muramoyl-L-alanyl-gamma-D-glutamyl-meso-2,6-diaminopimeloyl-D-alanyl-D-alanine + di-trans,octa-cis-undecaprenyl phosphate = di-trans,octa-cis-undecaprenyl diphospho-N-acetyl-alpha-D-muramoyl-L-alanyl-D-glutamyl-meso-2,6-diaminopimeloyl-D-alanyl-D-alanine + UMP. It participates in cell wall biogenesis; peptidoglycan biosynthesis. Functionally, catalyzes the initial step of the lipid cycle reactions in the biosynthesis of the cell wall peptidoglycan: transfers peptidoglycan precursor phospho-MurNAc-pentapeptide from UDP-MurNAc-pentapeptide onto the lipid carrier undecaprenyl phosphate, yielding undecaprenyl-pyrophosphoryl-MurNAc-pentapeptide, known as lipid I. The polypeptide is Phospho-N-acetylmuramoyl-pentapeptide-transferase (Vibrio parahaemolyticus serotype O3:K6 (strain RIMD 2210633)).